The primary structure comprises 245 residues: Type III pantothenate kinase (245 aa).

6–13 (DVGNTAMK) provides a ligand contact to ATP. Residues Tyr93 and 100 to 103 (GVDR) each bind substrate. Asp102 (proton acceptor) is an active-site residue. Asp121 provides a ligand contact to K(+). Ser124 is an ATP binding site. Thr175 contributes to the substrate binding site.

Belongs to the type III pantothenate kinase family. Homodimer. NH4(+) serves as cofactor. K(+) is required as a cofactor.

It is found in the cytoplasm. The catalysed reaction is (R)-pantothenate + ATP = (R)-4'-phosphopantothenate + ADP + H(+). It participates in cofactor biosynthesis; coenzyme A biosynthesis; CoA from (R)-pantothenate: step 1/5. In terms of biological role, catalyzes the phosphorylation of pantothenate (Pan), the first step in CoA biosynthesis. This chain is Type III pantothenate kinase, found in Alcanivorax borkumensis (strain ATCC 700651 / DSM 11573 / NCIMB 13689 / SK2).